The sequence spans 408 residues: Aspartokinase 2 (408 aa).

7-10 (KFGG) is an ATP binding site. Position 25-30 (25-30 (RAIAEK)) interacts with substrate. Serine 41 provides a ligand contact to ATP. Residues 47 to 49 (TDE), glutamate 74, 125 to 126 (LE), 150 to 153 (RGGS), and serine 153 each bind substrate. Residues 173-174 (TD) and 179-184 (FTTDPR) contribute to the ATP site. ACT domains lie at 264 to 337 (VTIY…TESK) and 343 to 408 (IVGS…PSAV). Residues 289–291 (NVD), glutamine 295, 354–355 (VA), 368–369 (LI), and 375–376 (SE) contribute to the substrate site.

This sequence belongs to the aspartokinase family. In terms of assembly, tetramer consisting of 2 isoforms Alpha (catalytic and regulation) and of a homodimer of 2 isoforms Beta (regulation).

The enzyme catalyses L-aspartate + ATP = 4-phospho-L-aspartate + ADP. The protein operates within amino-acid biosynthesis; L-lysine biosynthesis via DAP pathway; (S)-tetrahydrodipicolinate from L-aspartate: step 1/4. Its pathway is amino-acid biosynthesis; L-methionine biosynthesis via de novo pathway; L-homoserine from L-aspartate: step 1/3. It participates in amino-acid biosynthesis; L-threonine biosynthesis; L-threonine from L-aspartate: step 1/5. Lysine-sensitive. Regulated by degradation in response to starvation of cells for various nutrients. Ammonium starvation induced the fastest aspartokinase II decline, followed by amino acid starvation and glucose limitation. Its function is as follows. Catalyzes the phosphorylation of the beta-carboxyl group of aspartic acid with ATP to yield 4-phospho-L-aspartate, which is involved in the branched biosynthetic pathway leading to the biosynthesis of amino acids threonine, isoleucine and methionine. The protein is Aspartokinase 2 (lysC) of Bacillus subtilis (strain 168).